The primary structure comprises 715 residues: 1,4-alpha-glucan branching enzyme GlgB (715 aa).

The active-site Nucleophile is Asp-396. Glu-449 (proton donor) is an active-site residue.

Belongs to the glycosyl hydrolase 13 family. GlgB subfamily. As to quaternary structure, monomer.

The enzyme catalyses Transfers a segment of a (1-&gt;4)-alpha-D-glucan chain to a primary hydroxy group in a similar glucan chain.. It participates in glycan biosynthesis; glycogen biosynthesis. Catalyzes the formation of the alpha-1,6-glucosidic linkages in glycogen by scission of a 1,4-alpha-linked oligosaccharide from growing alpha-1,4-glucan chains and the subsequent attachment of the oligosaccharide to the alpha-1,6 position. The protein is 1,4-alpha-glucan branching enzyme GlgB of Vibrio vulnificus (strain CMCP6).